Reading from the N-terminus, the 911-residue chain is Nitrate reductase [NADH], clone PBNBR1405 (911 aa).

Residues 1 to 68 form a disordered region; the sequence is MATSVDNRHY…RFDSSDDEDE (68 aa). Residues 49 to 62 show a composition bias toward basic and acidic residues; it reads KSVDKTTKEDRFDS. Cys191 lines the Mo-molybdopterin pocket. In terms of domain architecture, Cytochrome b5 heme-binding spans 539–614; that stretch reads SKMYSMSEVR…LEDYRIGELI (76 aa). Heme-binding residues include His574 and His597. The 113-residue stretch at 654-766 folds into the FAD-binding FR-type domain; it reads REKVPVKLIE…KGPLGHIEYQ (113 aa). FAD is bound by residues 706–709, 723–727, Phe728, Phe735, 740–742, and Thr793; these read RAYT, VIKVY, and LMS.

The protein belongs to the nitrate reductase family. In terms of assembly, homodimer. The cofactor is FAD. It depends on heme as a cofactor. Requires Mo-molybdopterin as cofactor.

The enzyme catalyses nitrite + NAD(+) + H2O = nitrate + NADH + H(+). In terms of biological role, nitrate reductase is a key enzyme involved in the first step of nitrate assimilation in plants, fungi and bacteria. The protein is Nitrate reductase [NADH], clone PBNBR1405 (NIA1) of Brassica napus (Rape).